The primary structure comprises 256 residues: Ribonuclease 3 (256 aa).

The 123-residue stretch at 3–125 folds into the RNase III domain; that stretch reads LDALQQRLGY…IFGAVFLDGG (123 aa). Glu-38 lines the Mg(2+) pocket. Asp-42 is a catalytic residue. Asp-111 and Glu-114 together coordinate Mg(2+). Glu-114 is an active-site residue. Residues 152–222 form the DRBM domain; the sequence is DAKTLLQEYL…AKLALDEAHR (71 aa). The disordered stretch occupies residues 226-256; it reads QLVKRSRAERTGKTRKQATPPDPQLSLRLKE.

It belongs to the ribonuclease III family. As to quaternary structure, homodimer. Requires Mg(2+) as cofactor.

It is found in the cytoplasm. The catalysed reaction is Endonucleolytic cleavage to 5'-phosphomonoester.. Its function is as follows. Digests double-stranded RNA. Involved in the processing of primary rRNA transcript to yield the immediate precursors to the large and small rRNAs (23S and 16S). Processes some mRNAs, and tRNAs when they are encoded in the rRNA operon. Processes pre-crRNA and tracrRNA of type II CRISPR loci if present in the organism. This chain is Ribonuclease 3, found in Ralstonia pickettii (strain 12J).